Here is a 124-residue protein sequence, read N- to C-terminus: Riboflavin kinase (124 aa).

10 to 15 (GLGKAA) is a binding site for CDP. Residues T39 and N41 each coordinate Mg(2+). FMN contacts are provided by T93 and E101. Residue 106–109 (DKLR) coordinates CDP.

The protein belongs to the archaeal riboflavin kinase family. Mg(2+) is required as a cofactor.

It catalyses the reaction riboflavin + CTP = CDP + FMN + H(+). It functions in the pathway cofactor biosynthesis; FMN biosynthesis; FMN from riboflavin (CTP route): step 1/1. Catalyzes the CTP-dependent phosphorylation of riboflavin (vitamin B2) to form flavin mononucleotide (FMN). The protein is Riboflavin kinase of Methanobrevibacter smithii (strain ATCC 35061 / DSM 861 / OCM 144 / PS).